The following is a 471-amino-acid chain: Tryptophanase (471 aa).

An N6-acetyllysine mark is found at Lys-5, Lys-115, and Lys-156. Lys-270 carries the post-translational modification N6-(pyridoxal phosphate)lysine. At Lys-450 the chain carries N6-acetyllysine.

This sequence belongs to the beta-eliminating lyase family. As to quaternary structure, homotetramer. Pyridoxal 5'-phosphate is required as a cofactor.

The enzyme catalyses L-tryptophan + H2O = indole + pyruvate + NH4(+). The protein operates within amino-acid degradation; L-tryptophan degradation via pyruvate pathway; indole and pyruvate from L-tryptophan: step 1/1. The polypeptide is Tryptophanase (Escherichia coli O6:H1 (strain CFT073 / ATCC 700928 / UPEC)).